Here is a 246-residue protein sequence, read N- to C-terminus: 2-C-methyl-D-erythritol 4-phosphate cytidylyltransferase (246 aa).

Belongs to the IspD/TarI cytidylyltransferase family. IspD subfamily.

It catalyses the reaction 2-C-methyl-D-erythritol 4-phosphate + CTP + H(+) = 4-CDP-2-C-methyl-D-erythritol + diphosphate. It functions in the pathway isoprenoid biosynthesis; isopentenyl diphosphate biosynthesis via DXP pathway; isopentenyl diphosphate from 1-deoxy-D-xylulose 5-phosphate: step 2/6. In terms of biological role, catalyzes the formation of 4-diphosphocytidyl-2-C-methyl-D-erythritol from CTP and 2-C-methyl-D-erythritol 4-phosphate (MEP). The sequence is that of 2-C-methyl-D-erythritol 4-phosphate cytidylyltransferase from Chlorobaculum tepidum (strain ATCC 49652 / DSM 12025 / NBRC 103806 / TLS) (Chlorobium tepidum).